A 74-amino-acid polypeptide reads, in one-letter code: Antimicrobial peptide HsAp4 (74 aa).

An N-terminal signal peptide occupies residues 1 to 21 (MSRRRILILVLVTMLVKTMAG). A propeptide spanning residues 22 to 33 (MESKWVETTYEI) is cleaved from the precursor. Arg65 is modified (arginine amide). Positions 69–74 (AISEQT) are excised as a propeptide.

Belongs to the non-disulfide-bridged peptide (NDBP) superfamily. Medium-length antimicrobial peptide (group 3) family. Expressed by the venom gland.

The protein localises to the secreted. The protein resides in the target cell membrane. In terms of biological role, possesses antimicrobial activity against both Gram-negative and Gram-positive bacteria, as well as against the fungus C.tropicalis. Also possesses a relatively high hemolytic activity. May act by disrupting the integrity of the bacterial cell membrane. In Heterometrus spinifer (Asia giant forest scorpion), this protein is Antimicrobial peptide HsAp4.